The following is a 2226-amino-acid chain: Rotatin (2226 aa).

A disordered region spans residues 295 to 346 (EARGPYHSPNPSPGSSSSRPSVVGRTGQRPRGDGQDWDAVSSSGSSSHTHVN). The span at 307-319 (PGSSSSRPSVVGR) shows a compositional bias: low complexity. Residue serine 311 is modified to Phosphoserine. Position 813 is an N6-acetyllysine (lysine 813).

The protein belongs to the rotatin family. As to quaternary structure, interacts with PPP1R35; this interaction allows the mutual recruitment to the centriole.

It is found in the cytoplasm. The protein resides in the cytoskeleton. Its subcellular location is the cilium basal body. In terms of biological role, involved in the genetic cascade that governs left-right specification. Required for correct asymmetric expression of NODAL, LEFTY and PITX2. The sequence is that of Rotatin from Mus musculus (Mouse).